Reading from the N-terminus, the 479-residue chain is Ribosomal RNA small subunit methyltransferase F (479 aa).

S-adenosyl-L-methionine is bound by residues 125 to 131 (AAAPGSK), E149, D176, and D194. The active-site Nucleophile is the C247.

It belongs to the class I-like SAM-binding methyltransferase superfamily. RsmB/NOP family.

The protein localises to the cytoplasm. It catalyses the reaction cytidine(1407) in 16S rRNA + S-adenosyl-L-methionine = 5-methylcytidine(1407) in 16S rRNA + S-adenosyl-L-homocysteine + H(+). Specifically methylates the cytosine at position 1407 (m5C1407) of 16S rRNA. In Shigella dysenteriae serotype 1 (strain Sd197), this protein is Ribosomal RNA small subunit methyltransferase F.